Consider the following 347-residue polypeptide: Biotin synthase (347 aa).

In terms of domain architecture, Radical SAM core spans 40–258 (AQVQVSTLLS…IAVARIVMPR (219 aa)). [4Fe-4S] cluster contacts are provided by C55, C59, and C62. [2Fe-2S] cluster is bound by residues C99, C130, C190, and R262.

It belongs to the radical SAM superfamily. Biotin synthase family. As to quaternary structure, homodimer. [4Fe-4S] cluster serves as cofactor. Requires [2Fe-2S] cluster as cofactor.

The catalysed reaction is (4R,5S)-dethiobiotin + (sulfur carrier)-SH + 2 reduced [2Fe-2S]-[ferredoxin] + 2 S-adenosyl-L-methionine = (sulfur carrier)-H + biotin + 2 5'-deoxyadenosine + 2 L-methionine + 2 oxidized [2Fe-2S]-[ferredoxin]. Its pathway is cofactor biosynthesis; biotin biosynthesis; biotin from 7,8-diaminononanoate: step 2/2. Its function is as follows. Catalyzes the conversion of dethiobiotin (DTB) to biotin by the insertion of a sulfur atom into dethiobiotin via a radical-based mechanism. In Stenotrophomonas maltophilia (strain R551-3), this protein is Biotin synthase.